The chain runs to 101 residues: Protein S100-A11 (101 aa).

2 consecutive EF-hand domains span residues 13–48 and 54–89; these read IESL…ELAS and KDPA…IAVA. Ca(2+)-binding residues include asparagine 30, lysine 32, glutamate 37, aspartate 67, asparagine 69, aspartate 71, glutamine 73, and glutamate 78.

Belongs to the S-100 family. As to quaternary structure, homodimer; disulfide-linked. As to expression, smooth muscle and non-muscle tissues.

The sequence is that of Protein S100-A11 (S100A11) from Gallus gallus (Chicken).